A 661-amino-acid chain; its full sequence is uncharacterized protein (661 aa).

Helical transmembrane passes span L27 to A47, V68 to V88, L116 to G136, V150 to A170, W179 to T199, A214 to L234, G251 to V271, G279 to V299, G313 to A333, S369 to L389, W396 to G416, M435 to L455, P488 to F508, E519 to I539, I552 to M572, and G599 to V619.

To M.leprae ML1998.

Its subcellular location is the cell membrane. This is an uncharacterized protein from Mycobacterium tuberculosis (strain CDC 1551 / Oshkosh).